The chain runs to 90 residues: Small ribosomal subunit protein uS15c (90 aa).

It belongs to the universal ribosomal protein uS15 family. In terms of assembly, part of the 30S ribosomal subunit.

It localises to the plastid. It is found in the chloroplast. This chain is Small ribosomal subunit protein uS15c (rps15-A), found in Ipomoea purpurea (Common morning glory).